Reading from the N-terminus, the 276-residue chain is Neuroendocrine protein 7B2 (276 aa).

The cysteines at positions 155 and 168 are disulfide-linked.

This sequence belongs to the 7B2 family. As to quaternary structure, interacts with amon/PC2 early in the secretory pathway. Dissociation occurs at later stages.

It is found in the secreted. Its function is as follows. Acts as a molecular chaperone for neuroendocrine convertase amon/PC2, preventing its premature activation in the regulated secretory pathway. Binds to inactive amon in the endoplasmic reticulum and facilitates its transport from there to later compartments of the secretory pathway where it is proteolytically matured and activated. Also required for cleavage of amon. The chain is Neuroendocrine protein 7B2 from Drosophila melanogaster (Fruit fly).